The chain runs to 389 residues: Endo-chitosanase C (389 aa).

A signal peptide spans 1-22; sequence MPIKSFASRLALSLAICGTAMG. One copy of the R3-1 repeat lies at 280-313; that stretch reads CSWPGHCAGFKNKGATCSSNDDCSDDLACQNGKC. An R3-2 repeat occupies 320-350; it reads ETCSWEGHCKGATCSSNDDCSDELACISGIC. One copy of the R3-3 repeat lies at 357–387; the sequence is ETCEWEGHCEGASCSSHDDCDGNLACKNGKC.

The protein belongs to the glycosyl hydrolase 75 family.

Its subcellular location is the secreted. The enzyme catalyses Endohydrolysis of beta-(1-&gt;4)-linkages between D-glucosamine residues in a partly acetylated chitosan.. In terms of biological role, chitosanase catalyzing the endo-type cleavage of chitosan, the deacylated form of chitin. Chitosanase may be crucial in the degradation of the deacetylated portion of chitin in the fungal cell wall. Chitoolisaccharides produced by the hydrolysis of partially N-acetylated chitosan are known to have many biological activities, including antibacterial activity, immune-enhancing effects, and elicitor activity. This chain is Endo-chitosanase C (csnC), found in Aspergillus oryzae (strain ATCC 42149 / RIB 40) (Yellow koji mold).